The following is a 511-amino-acid chain: Bifunctional purine biosynthesis protein PurH (511 aa).

The MGS-like domain maps to 1-145 (MKKRALVSVS…KNHKFVSVIV (145 aa)).

This sequence belongs to the PurH family.

It catalyses the reaction (6R)-10-formyltetrahydrofolate + 5-amino-1-(5-phospho-beta-D-ribosyl)imidazole-4-carboxamide = 5-formamido-1-(5-phospho-D-ribosyl)imidazole-4-carboxamide + (6S)-5,6,7,8-tetrahydrofolate. The catalysed reaction is IMP + H2O = 5-formamido-1-(5-phospho-D-ribosyl)imidazole-4-carboxamide. It functions in the pathway purine metabolism; IMP biosynthesis via de novo pathway; 5-formamido-1-(5-phospho-D-ribosyl)imidazole-4-carboxamide from 5-amino-1-(5-phospho-D-ribosyl)imidazole-4-carboxamide (10-formyl THF route): step 1/1. The protein operates within purine metabolism; IMP biosynthesis via de novo pathway; IMP from 5-formamido-1-(5-phospho-D-ribosyl)imidazole-4-carboxamide: step 1/1. This chain is Bifunctional purine biosynthesis protein PurH, found in Bacillus cereus (strain 03BB102).